Consider the following 728-residue polypeptide: 1,4-alpha-glucan branching enzyme GlgB (728 aa).

Asp405 serves as the catalytic Nucleophile. The Proton donor role is filled by Glu458.

This sequence belongs to the glycosyl hydrolase 13 family. GlgB subfamily. In terms of assembly, monomer.

The catalysed reaction is Transfers a segment of a (1-&gt;4)-alpha-D-glucan chain to a primary hydroxy group in a similar glucan chain.. It participates in glycan biosynthesis; glycogen biosynthesis. Catalyzes the formation of the alpha-1,6-glucosidic linkages in glycogen by scission of a 1,4-alpha-linked oligosaccharide from growing alpha-1,4-glucan chains and the subsequent attachment of the oligosaccharide to the alpha-1,6 position. The sequence is that of 1,4-alpha-glucan branching enzyme GlgB from Salmonella paratyphi A (strain ATCC 9150 / SARB42).